The primary structure comprises 463 residues: Lactaldehyde dehydrogenase (463 aa).

220–225 contributes to the NAD(+) binding site; sequence GSSKVG. Residues glutamate 240 and cysteine 274 contribute to the active site.

The protein belongs to the aldehyde dehydrogenase family. As to quaternary structure, homotetramer.

The catalysed reaction is (S)-lactaldehyde + NAD(+) + H2O = (S)-lactate + NADH + 2 H(+). It participates in cofactor biosynthesis; coenzyme F420 biosynthesis. Involved in F420 biosynthesis through the oxidation of lactaldehyde to lactate. The substrate preference order is propionaldehyde &gt; DL-lactaldehyde, DL-glyceraldehyde &gt; crotonaldehyde &gt; glycolaldehyde &gt; acetaldehyde, acrolein &gt; formaldehyde. No activity was observed towards methylglyoxal or glyceraldehyde-3-phosphate. Has a preference for NAD over NADP. This chain is Lactaldehyde dehydrogenase, found in Methanocaldococcus jannaschii (strain ATCC 43067 / DSM 2661 / JAL-1 / JCM 10045 / NBRC 100440) (Methanococcus jannaschii).